We begin with the raw amino-acid sequence, 371 residues long: Queuine tRNA-ribosyltransferase (371 aa).

Aspartate 93 (proton acceptor) is an active-site residue. Substrate is bound by residues 93 to 97, aspartate 147, glutamine 191, and glycine 218; that span reads DSGGF. The RNA binding stretch occupies residues 249-255; sequence GVGTVVD. The active-site Nucleophile is aspartate 268. Residues 273–277 form an RNA binding; important for wobble base 34 recognition region; it reads TRNAR. Zn(2+)-binding residues include cysteine 306, cysteine 308, cysteine 311, and histidine 337.

This sequence belongs to the queuine tRNA-ribosyltransferase family. As to quaternary structure, homodimer. Within each dimer, one monomer is responsible for RNA recognition and catalysis, while the other monomer binds to the replacement base PreQ1. Requires Zn(2+) as cofactor.

It catalyses the reaction 7-aminomethyl-7-carbaguanine + guanosine(34) in tRNA = 7-aminomethyl-7-carbaguanosine(34) in tRNA + guanine. It functions in the pathway tRNA modification; tRNA-queuosine biosynthesis. Functionally, catalyzes the base-exchange of a guanine (G) residue with the queuine precursor 7-aminomethyl-7-deazaguanine (PreQ1) at position 34 (anticodon wobble position) in tRNAs with GU(N) anticodons (tRNA-Asp, -Asn, -His and -Tyr). Catalysis occurs through a double-displacement mechanism. The nucleophile active site attacks the C1' of nucleotide 34 to detach the guanine base from the RNA, forming a covalent enzyme-RNA intermediate. The proton acceptor active site deprotonates the incoming PreQ1, allowing a nucleophilic attack on the C1' of the ribose to form the product. After dissociation, two additional enzymatic reactions on the tRNA convert PreQ1 to queuine (Q), resulting in the hypermodified nucleoside queuosine (7-(((4,5-cis-dihydroxy-2-cyclopenten-1-yl)amino)methyl)-7-deazaguanosine). The sequence is that of Queuine tRNA-ribosyltransferase from Leptospira biflexa serovar Patoc (strain Patoc 1 / Ames).